A 347-amino-acid polypeptide reads, in one-letter code: KRR1 small subunit processome component homolog (347 aa).

A KH domain is found at 124-194 (GCDIIKIGNL…VRDIVLETMN (71 aa)). Residues 231 to 246 (NKNLSKRKQPKVKKPK) are compositionally biased toward basic residues. Residues 231–347 (NKNLSKRKQP…LLKANKKSKS (117 aa)) are disordered. The stretch at 271–304 (FLNKEQKQAKRQQERQTKQAEAAKKQDERRNKDF) forms a coiled coil. 2 stretches are compositionally biased toward basic and acidic residues: residues 272 to 303 (LNKE…RNKD) and 318 to 329 (KANDNDSSDSRV). Over residues 337-347 (KLLKANKKSKS) the composition is skewed to basic residues.

This sequence belongs to the KRR1 family. Monomer. Component of the ribosomal small subunit (SSU) processome.

The protein localises to the nucleus. The protein resides in the nucleolus. Its function is as follows. Required for 40S ribosome biogenesis. Involved in nucleolar processing of pre-18S ribosomal RNA and ribosome assembly. Binds to RNA. Required for female germline development, cell viability during eye development and for survival of dividing cells and epithelial cells during early wing disk development. This is KRR1 small subunit processome component homolog from Drosophila willistoni (Fruit fly).